Here is a 139-residue protein sequence, read N- to C-terminus: Nucleoside diphosphate kinase (139 aa).

6 residues coordinate ATP: K9, F57, R85, T91, R102, and N112. H115 functions as the Pros-phosphohistidine intermediate in the catalytic mechanism.

The protein belongs to the NDK family. As to quaternary structure, homotetramer. Mg(2+) serves as cofactor.

It localises to the cytoplasm. The enzyme catalyses a 2'-deoxyribonucleoside 5'-diphosphate + ATP = a 2'-deoxyribonucleoside 5'-triphosphate + ADP. The catalysed reaction is a ribonucleoside 5'-diphosphate + ATP = a ribonucleoside 5'-triphosphate + ADP. Major role in the synthesis of nucleoside triphosphates other than ATP. The ATP gamma phosphate is transferred to the NDP beta phosphate via a ping-pong mechanism, using a phosphorylated active-site intermediate. In Neorickettsia sennetsu (strain ATCC VR-367 / Miyayama) (Ehrlichia sennetsu), this protein is Nucleoside diphosphate kinase.